The following is a 161-amino-acid chain: Endoribonuclease YbeY (161 aa).

Residues His127, His131, and His137 each coordinate Zn(2+).

This sequence belongs to the endoribonuclease YbeY family. Zn(2+) is required as a cofactor.

It localises to the cytoplasm. Its function is as follows. Single strand-specific metallo-endoribonuclease involved in late-stage 70S ribosome quality control and in maturation of the 3' terminus of the 16S rRNA. The chain is Endoribonuclease YbeY from Listeria monocytogenes serotype 4a (strain HCC23).